Consider the following 566-residue polypeptide: Oxygen-dependent choline dehydrogenase (566 aa).

FAD is bound at residue 7–36 (DYIICGAGSAGNVLATRLTEDPNVTVLLLE). The interval 185–204 (EGFGPMDRTVTPKGRRASTA) is disordered. His474 acts as the Proton acceptor in catalysis.

It belongs to the GMC oxidoreductase family. It depends on FAD as a cofactor.

The enzyme catalyses choline + A = betaine aldehyde + AH2. The catalysed reaction is betaine aldehyde + NAD(+) + H2O = glycine betaine + NADH + 2 H(+). It participates in amine and polyamine biosynthesis; betaine biosynthesis via choline pathway; betaine aldehyde from choline (cytochrome c reductase route): step 1/1. Its function is as follows. Involved in the biosynthesis of the osmoprotectant glycine betaine. Catalyzes the oxidation of choline to betaine aldehyde and betaine aldehyde to glycine betaine at the same rate. In Burkholderia vietnamiensis (strain G4 / LMG 22486) (Burkholderia cepacia (strain R1808)), this protein is Oxygen-dependent choline dehydrogenase.